The sequence spans 237 residues: Ribonuclease PH (237 aa).

Residues Arg86 and 124–126 (GTR) contribute to the phosphate site.

Belongs to the RNase PH family. Homohexameric ring arranged as a trimer of dimers.

The catalysed reaction is tRNA(n+1) + phosphate = tRNA(n) + a ribonucleoside 5'-diphosphate. In terms of biological role, phosphorolytic 3'-5' exoribonuclease that plays an important role in tRNA 3'-end maturation. Removes nucleotide residues following the 3'-CCA terminus of tRNAs; can also add nucleotides to the ends of RNA molecules by using nucleoside diphosphates as substrates, but this may not be physiologically important. Probably plays a role in initiation of 16S rRNA degradation (leading to ribosome degradation) during starvation. The polypeptide is Ribonuclease PH (Shewanella denitrificans (strain OS217 / ATCC BAA-1090 / DSM 15013)).